The primary structure comprises 150 residues: Kirola (150 aa).

Met-1 carries the N-acetylmethionine modification.

The protein belongs to the MLP family. Monomer. In terms of processing, the N-terminus is blocked.

This chain is Kirola, found in Actinidia deliciosa (Kiwi).